A 666-amino-acid chain; its full sequence is DEAD-box ATP-dependent RNA helicase 30 (666 aa).

Positions P53–R102 are disordered. Over residues P64–P76 the composition is skewed to low complexity. Residues E80–R92 show a composition bias toward basic and acidic residues. The short motif at R251–S279 is the Q motif element. One can recognise a Helicase ATP-binding domain in the interval W282–V457. ATP is bound at residue A295 to T302. Residues D405 to D408 carry the DEAD box motif. Residues R485–A630 enclose the Helicase C-terminal domain. The tract at residues S632–Y666 is disordered. Residues M636–N651 are compositionally biased toward gly residues.

It belongs to the DEAD box helicase family. DDX5/DBP2 subfamily.

It is found in the nucleus. It catalyses the reaction ATP + H2O = ADP + phosphate + H(+). ATP-dependent RNA helicase involved nonsense-mediated mRNA decay and ribosome biogenesis through rRNA processing. The sequence is that of DEAD-box ATP-dependent RNA helicase 30 from Oryza sativa subsp. japonica (Rice).